A 196-amino-acid chain; its full sequence is Aliphatic amidase regulator (196 aa).

The ANTAR domain occupies 129–190 (MAKLKQKTEQ…PILKIAQELL (62 aa)).

In terms of assembly, forms a complex with AmiC.

Functionally, positive controlling element of AmiE, the gene for aliphatic amidase. Acts as a transcriptional antitermination factor. It is thought to allow RNA polymerase read through a rho-independent transcription terminator between the AmiE promoter and gene. In Pseudomonas aeruginosa (strain ATCC 15692 / DSM 22644 / CIP 104116 / JCM 14847 / LMG 12228 / 1C / PRS 101 / PAO1), this protein is Aliphatic amidase regulator (amiR).